A 512-amino-acid polypeptide reads, in one-letter code: Lysine--tRNA ligase (512 aa).

Residues Glu408 and Glu415 each coordinate Mg(2+).

This sequence belongs to the class-II aminoacyl-tRNA synthetase family. As to quaternary structure, homodimer. Mg(2+) is required as a cofactor.

It is found in the cytoplasm. The catalysed reaction is tRNA(Lys) + L-lysine + ATP = L-lysyl-tRNA(Lys) + AMP + diphosphate. This chain is Lysine--tRNA ligase, found in Prochlorococcus marinus (strain MIT 9301).